Consider the following 812-residue polypeptide: Probable inorganic carbon transporter subunit DabA (812 aa).

Positions 337, 339, 499, and 514 each coordinate Zn(2+).

This sequence belongs to the inorganic carbon transporter (TC 9.A.2) DabA family. In terms of assembly, forms a complex with DabB. Requires Zn(2+) as cofactor.

The protein localises to the cell inner membrane. In terms of biological role, part of an energy-coupled inorganic carbon pump. This Xanthomonas oryzae pv. oryzae (strain KACC10331 / KXO85) protein is Probable inorganic carbon transporter subunit DabA.